The following is a 556-amino-acid chain: Delta-1-pyrroline-5-carboxylate dehydrogenase 12A1, mitochondrial (556 aa).

282 to 287 (GSSRVA) contacts NAD(+). The active-site Proton acceptor is Glu301. Cys336 functions as the Nucleophile in the catalytic mechanism.

Belongs to the aldehyde dehydrogenase family. In terms of tissue distribution, highly expressed in flowers. Constitutively expressed at low levels in the other tissues. Highly expressed in pollen grains and tissues undergoing cell death. Expressed in old leaves, mature siliques and developing embryos.

The protein resides in the mitochondrion matrix. It carries out the reaction (S)-1-pyrroline-5-carboxylate + NAD(+) + 2 H2O = L-glutamate + NADH + H(+). The protein operates within amino-acid degradation; L-proline degradation into L-glutamate; L-glutamate from L-proline: step 2/2. Plays a role in the inhibition of programmed cell death by converting the toxic proline catabolism intermediate (s)-1-pyrroline-5-carboxylate (P5C) to glutamate. The polypeptide is Delta-1-pyrroline-5-carboxylate dehydrogenase 12A1, mitochondrial (Arabidopsis thaliana (Mouse-ear cress)).